We begin with the raw amino-acid sequence, 732 residues long: Glycine--tRNA ligase (732 aa).

The transit peptide at 1 to 27 (MRHVLSLVYKCSVFSKQVTVFSNHLRL) directs the protein to the mitochondrion. A WHEP-TRS domain is found at 61–117 (ILAPLRANVKEQGDLVRKLKEEKAPEIDIKKAVAELKTRKKILEDKELSLAPAEDLF). Glutamate 297 contacts glycine. Residues 329 to 331 (RNE) and 340 to 341 (RV) each bind ATP. Glutamate 348 lines the glycine pocket. 453–454 (EC) is an ATP binding site. A glycine-binding site is contributed by 572–574 (EPS). Residue arginine 579 participates in ATP binding.

This sequence belongs to the class-II aminoacyl-tRNA synthetase family. As to quaternary structure, homodimer.

The protein resides in the mitochondrion. Its subcellular location is the cytoplasm. It is found in the cell projection. It localises to the axon. The enzyme catalyses tRNA(Gly) + glycine + ATP = glycyl-tRNA(Gly) + AMP + diphosphate. The catalysed reaction is 2 ATP + H(+) = P(1),P(4)-bis(5'-adenosyl) tetraphosphate + diphosphate. In terms of biological role, catalyzes the ATP-dependent ligation of glycine to the 3'-end of its cognate tRNA, via the formation of an aminoacyl-adenylate intermediate (Gly-AMP). Also produces diadenosine tetraphosphate (Ap4A), a universal pleiotropic signaling molecule needed for cell regulation pathways, by direct condensation of 2 ATPs. Thereby, may play a special role in Ap4A homeostasis. Required for terminal arborization of both dendrites and axons during development. The sequence is that of Glycine--tRNA ligase from Bombyx mori (Silk moth).